The chain runs to 120 residues: MSGDDTLARLAAVIESRRGGDPEASYVARLFHKGTDAILKKVGEEATEFVMAAKDGDRPKIVAEAADLWFHAMVALAHFGLTPAQVLAELERREGQSGLEEFALRKVRGREAESTKESGP.

This sequence belongs to the PRA-PH family.

It is found in the cytoplasm. The enzyme catalyses 1-(5-phospho-beta-D-ribosyl)-ATP + H2O = 1-(5-phospho-beta-D-ribosyl)-5'-AMP + diphosphate + H(+). It participates in amino-acid biosynthesis; L-histidine biosynthesis; L-histidine from 5-phospho-alpha-D-ribose 1-diphosphate: step 2/9. In Methylibium petroleiphilum (strain ATCC BAA-1232 / LMG 22953 / PM1), this protein is Phosphoribosyl-ATP pyrophosphatase.